Here is a 44-residue protein sequence, read N- to C-terminus: Putative keratin-associated protein 20-4 (44 aa).

Belongs to the KRTAP type 20 family. As to quaternary structure, interacts with hair keratins.

In the hair cortex, hair keratin intermediate filaments are embedded in an interfilamentous matrix, consisting of hair keratin-associated proteins (KRTAP), which are essential for the formation of a rigid and resistant hair shaft through their extensive disulfide bond cross-linking with abundant cysteine residues of hair keratins. The matrix proteins include the high-sulfur and high-glycine-tyrosine keratins. The protein is Putative keratin-associated protein 20-4 (KRTAP20-4) of Homo sapiens (Human).